The primary structure comprises 532 residues: uncharacterized protein (532 aa).

Transmembrane regions (helical) follow at residues 13–33, 53–73, 80–100, 111–131, 142–162, 169–189, 203–223, 231–251, 273–293, 306–326, 334–354, 361–381, and 483–503; these read MSLL…QTLL, WLTT…AFLI, SLFL…GIAP, IQAV…LLIF, IFGL…GWII, IMFY…FFIF, LGAI…SEAG, IVLS…VQQL, VINI…PIYL, LLLL…GILF, LAII…QLTI, IMLI…PVMT, and INDA…LSIF.

This sequence belongs to the major facilitator superfamily. EmrB family.

It is found in the cell membrane. This is an uncharacterized protein from Bacillus subtilis (strain 168).